A 341-amino-acid polypeptide reads, in one-letter code: Methionine import ATP-binding protein MetN 2 (341 aa).

Residues 2-241 (IELKEVVKEY…PQHTVTKRFV (240 aa)) form the ABC transporter domain. 38 to 45 (GFSGAGKS) provides a ligand contact to ATP.

It belongs to the ABC transporter superfamily. Methionine importer (TC 3.A.1.24) family. As to quaternary structure, the complex is composed of two ATP-binding proteins (MetN), two transmembrane proteins (MetI) and a solute-binding protein (MetQ).

It localises to the cell membrane. It carries out the reaction L-methionine(out) + ATP + H2O = L-methionine(in) + ADP + phosphate + H(+). The enzyme catalyses D-methionine(out) + ATP + H2O = D-methionine(in) + ADP + phosphate + H(+). Functionally, part of the ABC transporter complex MetNIQ involved in methionine import. Responsible for energy coupling to the transport system. The polypeptide is Methionine import ATP-binding protein MetN 2 (Staphylococcus aureus (strain USA300)).